The sequence spans 240 residues: Sugar fermentation stimulation protein homolog (240 aa).

The protein belongs to the SfsA family.

The protein is Sugar fermentation stimulation protein homolog of Saccharolobus islandicus (strain M.16.4 / Kamchatka #3) (Sulfolobus islandicus).